The primary structure comprises 437 residues: Adenylosuccinate synthetase (437 aa).

GTP is bound by residues 12–18 (GDEGKGK) and 40–42 (GHT). Residue D13 is the Proton acceptor of the active site. Mg(2+) contacts are provided by D13 and G40. Residues 13–16 (DEGK), 38–41 (NAGH), T128, R142, Q223, T238, and R302 contribute to the IMP site. The active-site Proton donor is the H41. 298 to 304 (TTTGRRR) provides a ligand contact to substrate. GTP-binding positions include R304, 330 to 332 (KLD), and 412 to 414 (SLG).

This sequence belongs to the adenylosuccinate synthetase family. As to quaternary structure, homodimer. It depends on Mg(2+) as a cofactor.

The protein resides in the cytoplasm. It carries out the reaction IMP + L-aspartate + GTP = N(6)-(1,2-dicarboxyethyl)-AMP + GDP + phosphate + 2 H(+). The protein operates within purine metabolism; AMP biosynthesis via de novo pathway; AMP from IMP: step 1/2. In terms of biological role, plays an important role in the de novo pathway of purine nucleotide biosynthesis. Catalyzes the first committed step in the biosynthesis of AMP from IMP. This is Adenylosuccinate synthetase from Prochlorococcus marinus (strain MIT 9211).